A 218-amino-acid polypeptide reads, in one-letter code: NAD(P)H-quinone oxidoreductase subunit I (218 aa).

4Fe-4S ferredoxin-type domains follow at residues 55-84 (GRIH…VDWV) and 95-124 (RNYS…MTEE). Residues cysteine 64, cysteine 67, cysteine 70, cysteine 74, cysteine 104, cysteine 107, cysteine 110, and cysteine 114 each coordinate [4Fe-4S] cluster. Residues 169–218 (MDPHDVPANQPRAGQLPAEALKSLSLQQESVQGDEGESLQDASDQDQPSG) form a disordered region. Over residues 208 to 218 (QDASDQDQPSG) the composition is skewed to polar residues.

This sequence belongs to the complex I 23 kDa subunit family. NDH-1 is composed of at least 11 different subunits. Requires [4Fe-4S] cluster as cofactor.

The protein localises to the cellular thylakoid membrane. The catalysed reaction is a plastoquinone + NADH + (n+1) H(+)(in) = a plastoquinol + NAD(+) + n H(+)(out). It carries out the reaction a plastoquinone + NADPH + (n+1) H(+)(in) = a plastoquinol + NADP(+) + n H(+)(out). In terms of biological role, NDH-1 shuttles electrons from an unknown electron donor, via FMN and iron-sulfur (Fe-S) centers, to quinones in the respiratory and/or the photosynthetic chain. The immediate electron acceptor for the enzyme in this species is believed to be plastoquinone. Couples the redox reaction to proton translocation, and thus conserves the redox energy in a proton gradient. This chain is NAD(P)H-quinone oxidoreductase subunit I, found in Prochlorococcus marinus (strain MIT 9313).